The following is a 273-amino-acid chain: Dermonecrotic toxin LruSicTox-alphaIC1d (273 aa).

Residue His5 is part of the active site. The Mg(2+) site is built by Glu25 and Asp27. Catalysis depends on His41, which acts as the Nucleophile. Cystine bridges form between Cys45–Cys51 and Cys47–Cys190. Asp85 is a binding site for Mg(2+).

It belongs to the arthropod phospholipase D family. Class II subfamily. Mg(2+) serves as cofactor. Expressed by the venom gland.

The protein localises to the secreted. It carries out the reaction an N-(acyl)-sphingosylphosphocholine = an N-(acyl)-sphingosyl-1,3-cyclic phosphate + choline. It catalyses the reaction an N-(acyl)-sphingosylphosphoethanolamine = an N-(acyl)-sphingosyl-1,3-cyclic phosphate + ethanolamine. The enzyme catalyses a 1-acyl-sn-glycero-3-phosphocholine = a 1-acyl-sn-glycero-2,3-cyclic phosphate + choline. The catalysed reaction is a 1-acyl-sn-glycero-3-phosphoethanolamine = a 1-acyl-sn-glycero-2,3-cyclic phosphate + ethanolamine. Functionally, dermonecrotic toxins cleave the phosphodiester linkage between the phosphate and headgroup of certain phospholipids (sphingolipid and lysolipid substrates), forming an alcohol (often choline) and a cyclic phosphate. This toxin acts on sphingomyelin (SM). It may also act on ceramide phosphoethanolamine (CPE), lysophosphatidylcholine (LPC) and lysophosphatidylethanolamine (LPE), but not on lysophosphatidylserine (LPS), and lysophosphatidylglycerol (LPG). It acts by transphosphatidylation, releasing exclusively cyclic phosphate products as second products. Induces dermonecrosis, hemolysis, increased vascular permeability, edema, inflammatory response, and platelet aggregation. The protein is Dermonecrotic toxin LruSicTox-alphaIC1d of Loxosceles rufescens (Mediterranean recluse spider).